Here is a 335-residue protein sequence, read N- to C-terminus: O(6)-methylguanine-induced apoptosis 2 (335 aa).

The span at 1-11 (MDNSTQKDQHS) shows a compositional bias: basic and acidic residues. A disordered region spans residues 1–20 (MDNSTQKDQHSGKKYSRKAN). STPGR repeat units follow at residues 68-75 (PGPGFYNV), 110-118 (PAANAYTIP), 149-156 (PAPNQYNA), 188-215 (GPAP…FKSK), 226-255 (GPGP…LNFS), 267-284 (LPGP…PRKH), and 308-317 (PGPATYRPEF). Position 73 is a phosphotyrosine (Tyr-73).

This sequence belongs to the STPG1 family.

It is found in the cytoplasm. It localises to the nucleus. In terms of biological role, may positively contribute to the induction of apoptosis triggered by O(6)-methylguanine. In Bos taurus (Bovine), this protein is O(6)-methylguanine-induced apoptosis 2 (STPG1).